The sequence spans 465 residues: Cysteine--tRNA ligase (465 aa).

Cysteine 30 contacts Zn(2+). Residues 32–42 carry the 'HIGH' region motif; the sequence is ITVYDYCHVGH. Zn(2+) is bound by residues cysteine 214, histidine 239, and glutamate 243. Residues 271-275 carry the 'KMSKS' region motif; sequence KMSKS. Lysine 274 is an ATP binding site.

The protein belongs to the class-I aminoacyl-tRNA synthetase family. In terms of assembly, monomer. Zn(2+) serves as cofactor.

The protein localises to the cytoplasm. The catalysed reaction is tRNA(Cys) + L-cysteine + ATP = L-cysteinyl-tRNA(Cys) + AMP + diphosphate. In Burkholderia ambifaria (strain MC40-6), this protein is Cysteine--tRNA ligase.